The following is an 84-amino-acid chain: Large ribosomal subunit protein bL31B (84 aa).

The protein belongs to the bacterial ribosomal protein bL31 family. Type B subfamily. As to quaternary structure, part of the 50S ribosomal subunit.

The polypeptide is Large ribosomal subunit protein bL31B (Rhodococcus opacus (strain B4)).